The following is a 147-amino-acid chain: D-aminoacyl-tRNA deacylase (147 aa).

Residues 137–138 (GP) carry the Gly-cisPro motif, important for rejection of L-amino acids motif.

The protein belongs to the DTD family. As to quaternary structure, homodimer.

It is found in the cytoplasm. It catalyses the reaction glycyl-tRNA(Ala) + H2O = tRNA(Ala) + glycine + H(+). It carries out the reaction a D-aminoacyl-tRNA + H2O = a tRNA + a D-alpha-amino acid + H(+). Functionally, an aminoacyl-tRNA editing enzyme that deacylates mischarged D-aminoacyl-tRNAs. Also deacylates mischarged glycyl-tRNA(Ala), protecting cells against glycine mischarging by AlaRS. Acts via tRNA-based rather than protein-based catalysis; rejects L-amino acids rather than detecting D-amino acids in the active site. By recycling D-aminoacyl-tRNA to D-amino acids and free tRNA molecules, this enzyme counteracts the toxicity associated with the formation of D-aminoacyl-tRNA entities in vivo and helps enforce protein L-homochirality. This is D-aminoacyl-tRNA deacylase from Bacillus licheniformis (strain ATCC 14580 / DSM 13 / JCM 2505 / CCUG 7422 / NBRC 12200 / NCIMB 9375 / NCTC 10341 / NRRL NRS-1264 / Gibson 46).